The following is a 210-amino-acid chain: Imidazoleglycerol-phosphate dehydratase (210 aa).

Belongs to the imidazoleglycerol-phosphate dehydratase family.

The protein localises to the cytoplasm. The enzyme catalyses D-erythro-1-(imidazol-4-yl)glycerol 3-phosphate = 3-(imidazol-4-yl)-2-oxopropyl phosphate + H2O. It functions in the pathway amino-acid biosynthesis; L-histidine biosynthesis; L-histidine from 5-phospho-alpha-D-ribose 1-diphosphate: step 6/9. The chain is Imidazoleglycerol-phosphate dehydratase from Mycobacterium leprae (strain Br4923).